The sequence spans 64 residues: Large ribosomal subunit protein bL35 (64 aa).

The tract at residues 1 to 54 (MPKIKSNSGAAKRFKKTAHGFKHKQSFRSHILTKKSTKRKRQLRGMKQIHDADK) is disordered. The segment covering 12 to 44 (KRFKKTAHGFKHKQSFRSHILTKKSTKRKRQLR) has biased composition (basic residues).

Belongs to the bacterial ribosomal protein bL35 family.

The protein is Large ribosomal subunit protein bL35 of Chromohalobacter salexigens (strain ATCC BAA-138 / DSM 3043 / CIP 106854 / NCIMB 13768 / 1H11).